A 197-amino-acid polypeptide reads, in one-letter code: UPF0637 protein LEUM_0496 (197 aa).

The protein belongs to the UPF0637 family.

This chain is UPF0637 protein LEUM_0496, found in Leuconostoc mesenteroides subsp. mesenteroides (strain ATCC 8293 / DSM 20343 / BCRC 11652 / CCM 1803 / JCM 6124 / NCDO 523 / NBRC 100496 / NCIMB 8023 / NCTC 12954 / NRRL B-1118 / 37Y).